A 715-amino-acid chain; its full sequence is Methylcrotonoyl-CoA carboxylase subunit alpha, mitochondrial (715 aa).

The N-terminal 38 residues, 1 to 38 (MAAAALLAAVDRNQLRRVPILLLQPREWPWKHRTVKYG), are a transit peptide targeting the mitochondrion. A Biotin carboxylation domain is found at 45–490 (ITKVLIANRG…HTDFIPQHHK (446 aa)). K159 is an ATP binding site. Positions 163–360 (KSIMAAAGVP…LVEWQLRIAA (198 aa)) constitute an ATP-grasp domain. N6-acetyllysine is present on K193. ATP contacts are provided by residues K201 and 207-208 (GG). K233 is modified (N6-acetyllysine). 3 residues coordinate ATP: H251, H278, and E318. R335 is an active-site residue. K490 bears the N6-acetyllysine mark. The residue at position 577 (K577) is an N6-acetyllysine; alternate. An N6-succinyllysine; alternate modification is found at K577. The Biotinyl-binding domain occupies 622–711 (SIEVGIPVPK…NRHAPLVEFE (90 aa)). K677 bears the N6-biotinyllysine mark.

Probably a dodecamer composed of six biotin-containing alpha subunits (MCCC1) and six beta (MCCC2) subunits. Interacts (via the biotin carboxylation domain) with SIRT4. The cofactor is biotin. In terms of processing, acetylated.

It localises to the mitochondrion matrix. It catalyses the reaction 3-methylbut-2-enoyl-CoA + hydrogencarbonate + ATP = 3-methyl-(2E)-glutaconyl-CoA + ADP + phosphate + H(+). Its pathway is amino-acid degradation; L-leucine degradation; (S)-3-hydroxy-3-methylglutaryl-CoA from 3-isovaleryl-CoA: step 2/3. Biotin-attachment subunit of the 3-methylcrotonyl-CoA carboxylase, an enzyme that catalyzes the conversion of 3-methylcrotonyl-CoA to 3-methylglutaconyl-CoA, a critical step for leucine and isovaleric acid catabolism. The chain is Methylcrotonoyl-CoA carboxylase subunit alpha, mitochondrial from Rattus norvegicus (Rat).